We begin with the raw amino-acid sequence, 709 residues long: Fatty acid oxidation complex subunit alpha (709 aa).

Positions 1–188 (MEKTFNLTRR…KMGLVNDVVP (188 aa)) are enoyl-CoA hydratase. The tract at residues 308 to 709 (RKVKKAVILG…EMAAEKTRFF (402 aa)) is 3-hydroxyacyl-CoA dehydrogenase.

It in the N-terminal section; belongs to the enoyl-CoA hydratase/isomerase family. The protein in the central section; belongs to the 3-hydroxyacyl-CoA dehydrogenase family. As to quaternary structure, heterotetramer of two alpha chains (FadJ) and two beta chains (FadI).

It localises to the cytoplasm. The catalysed reaction is a (3S)-3-hydroxyacyl-CoA = a (2E)-enoyl-CoA + H2O. The enzyme catalyses a 4-saturated-(3S)-3-hydroxyacyl-CoA = a (3E)-enoyl-CoA + H2O. It carries out the reaction a (3S)-3-hydroxyacyl-CoA + NAD(+) = a 3-oxoacyl-CoA + NADH + H(+). It catalyses the reaction (3S)-3-hydroxybutanoyl-CoA = (3R)-3-hydroxybutanoyl-CoA. It functions in the pathway lipid metabolism; fatty acid beta-oxidation. Functionally, catalyzes the formation of a hydroxyacyl-CoA by addition of water on enoyl-CoA. Also exhibits 3-hydroxyacyl-CoA epimerase and 3-hydroxyacyl-CoA dehydrogenase activities. This Shewanella sp. (strain MR-7) protein is Fatty acid oxidation complex subunit alpha.